The chain runs to 1353 residues: MSHRVLVIGSGGREHAICWKLSQSPKVAQIYALPGSHGIQLVEKCRNLDAKTLDPKDFEAIAKWSKENQIALVVVGPEDPLALGLGDVLQSAGIPCFGPGKQGAQIEADKKWAKDFMLRHGIPTARYESFTDTEKAKAFIRSAPYPALVVKAAGLAAGKGVVVAANAKEACQAVDEILGDLKYGQAGATLVVEELLEGEEVSVLAFTDGKSVRAMLPAQDHKRLGNGDTGPNTGGMGAYCPCPLISQPALELVQKAVLERAVQGLIKERINYQGVLYAGLMLTRDGPRVLEFNCRFGDPETQVILPLLESDLFDVMEACCSGKLDKIPLQWRNGVSAVGVILASAGYPETSTKGCIISGLPAANTPTQLVFHSGLAVNAQKEALTNGGRVLIAIALDGSLKEAAAKATKLAGSISFSGSGAQYRTDIAQKAFKIASASTPGLSYKDSGVDIDAGDALVQRIKPLSRGTQRPGVIGGLGGFGGLFRLKELTYKEPVIAEATQGVGAKIHLALTHEFYENVGYDLFALAANDVLEVGAEPVAFLDYIACGKLQVPLAAQLVKGMADGCRDARCALVGGETAEMPSLYAPGQHDMAGYCVGIVEHSRILPRFDLYQPGDLLIGLPSSGLHCAGFNEILTQLAASKVNLRERSPVDGGDDGLTLAHVLATPTQLYVQQLLPHLQKGDEIKSVAHVTHGLLNDILRLLPDGFETTLDFGAVPVPKIFGWLAGKLKLSAQTILERHNCGIGMVLILPQSSQLWRTSLPGAKVLGVLQRRSKVSGSPVQVRNFVEQLEKVASPFGGLGDRELPEELKKLPSNSDLSAPREECFENAAGRRLTRIPTHYKDPILILGTDGVGTKLKIAQQTNRNTSVGIDLVAMCVNDILCNGAEPISFSSYYACGHWQEQLAKGVHSGVQEGARQANSSFIDSHSAALPLLYEPQVYDLAGFALGIAEHTGILPLLAEIQPGDVLIGLPSSGVHSNGFSLVHAVLKRVGLGLHDKAPFSDKTLGEELLVPTKIYVKALSTLLSRGKHGIKALAHITGGGLSENIPRVLRKDLAVRLDANKFQLPPVFAWLAAAGNISSTELQRTYNCGLGMVLVVAPTEVEDVLKELRYPQRAAVVGEVVARKDPKKSQVVVQNFEASLARTQKMLSQRRKRVAVLISGTGSNLQALIDATRDSAQGIHADVVLVISNKPGVLGLQRATQAGIPSLVISHKDFASREVYDAELTRNLKAARVDLICLAGFMRVLSAPFVREWRGRLVNIHPSLLPKYPGLHVQKQALEAGEKESGCTVHFVDEGVDTGAIIVQAAVPILPDDDEDSLTQRIHKAEHWAFPRALAMLVNGTALISPEVSSQ.

Residues 114-321 (KDFMLRHGIP…LFDVMEACCS (208 aa)) form the ATP-grasp domain. Residues 193–196 (EELL), glutamate 200, arginine 223, and asparagine 232 each bind ATP. 2 residues coordinate Mg(2+): glutamate 291 and asparagine 293. An AIRS domain region spans residues 441–1155 (GLSYKDSGVD…QKMLSQRRKR (715 aa)). 2 positions are modified to phosphoserine: serine 814 and serine 816. The GART domain stretch occupies residues 1153 to 1353 (RKRVAVLISG…ALISPEVSSQ (201 aa)). 1164-1166 (GSN) provides a ligand contact to N(1)-(5-phospho-beta-D-ribosyl)glycinamide. (6R)-10-formyltetrahydrofolate is bound by residues arginine 1219, 1244-1247 (MRVL), and asparagine 1261. The active-site Proton donor is the histidine 1263. 1295–1299 (DEGVD) lines the (6R)-10-formyltetrahydrofolate pocket. Residue 1325–1328 (HKAE) coordinates N(1)-(5-phospho-beta-D-ribosyl)glycinamide.

This sequence in the N-terminal section; belongs to the GARS family. It in the central section; belongs to the AIR synthase family. In the C-terminal section; belongs to the GART family. In terms of assembly, homodimer. Mg(2+) serves as cofactor. It depends on Mn(2+) as a cofactor.

The catalysed reaction is 5-phospho-beta-D-ribosylamine + glycine + ATP = N(1)-(5-phospho-beta-D-ribosyl)glycinamide + ADP + phosphate + H(+). The enzyme catalyses 2-formamido-N(1)-(5-O-phospho-beta-D-ribosyl)acetamidine + ATP = 5-amino-1-(5-phospho-beta-D-ribosyl)imidazole + ADP + phosphate + H(+). It catalyses the reaction N(1)-(5-phospho-beta-D-ribosyl)glycinamide + (6R)-10-formyltetrahydrofolate = N(2)-formyl-N(1)-(5-phospho-beta-D-ribosyl)glycinamide + (6S)-5,6,7,8-tetrahydrofolate + H(+). It participates in purine metabolism; IMP biosynthesis via de novo pathway; 5-amino-1-(5-phospho-D-ribosyl)imidazole from N(2)-formyl-N(1)-(5-phospho-D-ribosyl)glycinamide: step 2/2. It functions in the pathway purine metabolism; IMP biosynthesis via de novo pathway; N(1)-(5-phospho-D-ribosyl)glycinamide from 5-phospho-alpha-D-ribose 1-diphosphate: step 2/2. Its pathway is purine metabolism; IMP biosynthesis via de novo pathway; N(2)-formyl-N(1)-(5-phospho-D-ribosyl)glycinamide from N(1)-(5-phospho-D-ribosyl)glycinamide (10-formyl THF route): step 1/1. In terms of biological role, trifunctional enzyme that catalyzes three distinct reactions as part of the 'de novo' inosine monophosphate biosynthetic pathway. This is Trifunctional purine biosynthetic protein adenosine-3 from Drosophila melanogaster (Fruit fly).